Reading from the N-terminus, the 75-residue chain is UPF0154 protein MMOB4450 (75 aa).

Residues 7 to 27 (IGLIVGLSILFTIVGLVVGFF) traverse the membrane as a helical segment.

This sequence belongs to the UPF0154 family.

The protein resides in the cell membrane. The sequence is that of UPF0154 protein MMOB4450 from Mycoplasma mobile (strain ATCC 43663 / 163K / NCTC 11711) (Mesomycoplasma mobile).